The sequence spans 227 residues: GTP:AMP phosphotransferase AK3, mitochondrial (227 aa).

GTP is bound by residues Gly-17, Gly-19, Lys-20, Gly-21, and Thr-22. Residue Lys-20 is modified to N6-succinyllysine. Lys-29 carries the post-translational modification N6-acetyllysine; alternate. Lys-29 is subject to N6-succinyllysine; alternate. At Lys-34 the chain carries N6-acetyllysine. The residue at position 37 (Ser-37) is a Phosphoserine. Positions 37 to 66 are NMP; it reads SSGDLLRQNMLQGTEIAVLAKSFIDQGKLI. Residues Ser-38 and Arg-43 each contribute to the AMP site. Residue Lys-57 is modified to N6-succinyllysine. Residues Lys-64 and Lys-80 each carry the N6-acetyllysine; alternate modification. Residues Lys-64 and Lys-80 each carry the N6-succinyllysine; alternate modification. Lys-64 contributes to the AMP binding site. The AMP site is built by Gly-91, Arg-94, and Gln-98. Residues 127–164 are LID; that stretch reads ARWIHPASGRVYNIEFNPPKTVGIDDLTGEPLIQREDD. The GTP site is built by Arg-128, Tyr-138, Asn-139, Arg-161, and Arg-172. Lys-174 and Lys-189 each carry N6-acetyllysine; alternate. N6-succinyllysine; alternate is present on residues Lys-174 and Lys-189. Thr-201 contributes to the GTP binding site. Lys-203 carries the post-translational modification N6-acetyllysine.

It belongs to the adenylate kinase family. AK3 subfamily. Monomer.

It is found in the mitochondrion matrix. The catalysed reaction is a ribonucleoside 5'-triphosphate + AMP = a ribonucleoside 5'-diphosphate + ADP. It catalyses the reaction GTP + AMP = GDP + ADP. The enzyme catalyses ITP + AMP = IDP + ADP. In terms of biological role, mitochondrial adenylate kinase with a specific GTP:AMP phosphotransferase activity. Could also use ITP as phosphate donor. Its physiological function is to recycle GTP into GDP which is necessary for the TCA cycle in the mitochondrial matrix. This chain is GTP:AMP phosphotransferase AK3, mitochondrial, found in Rattus norvegicus (Rat).